A 525-amino-acid chain; its full sequence is GMP synthase [glutamine-hydrolyzing] (525 aa).

Residues Lys-8–Asn-207 enclose the Glutamine amidotransferase type-1 domain. The active-site Nucleophile is the Cys-85. Active-site residues include His-181 and Glu-183. The 193-residue stretch at Trp-208–Arg-400 folds into the GMPS ATP-PPase domain. Ser-235–Ser-241 serves as a coordination point for ATP.

In terms of assembly, homodimer.

It catalyses the reaction XMP + L-glutamine + ATP + H2O = GMP + L-glutamate + AMP + diphosphate + 2 H(+). It functions in the pathway purine metabolism; GMP biosynthesis; GMP from XMP (L-Gln route): step 1/1. Its function is as follows. Catalyzes the synthesis of GMP from XMP. This chain is GMP synthase [glutamine-hydrolyzing], found in Shewanella woodyi (strain ATCC 51908 / MS32).